The sequence spans 498 residues: Glycerol kinase (498 aa).

Residue T12 participates in ADP binding. ATP is bound by residues T12, T13, and S14. T12 lines the sn-glycerol 3-phosphate pocket. R16 contributes to the ADP binding site. Sn-glycerol 3-phosphate contacts are provided by R82, E83, Y134, and D243. Residues R82, E83, Y134, D243, and Q244 each contribute to the glycerol site. The ADP site is built by T265 and G308. 4 residues coordinate ATP: T265, G308, Q312, and G409. 2 residues coordinate ADP: G409 and N413.

Belongs to the FGGY kinase family. As to quaternary structure, homotetramer and homodimer (in equilibrium).

It catalyses the reaction glycerol + ATP = sn-glycerol 3-phosphate + ADP + H(+). The protein operates within polyol metabolism; glycerol degradation via glycerol kinase pathway; sn-glycerol 3-phosphate from glycerol: step 1/1. Its activity is regulated as follows. Activated by phosphorylation and inhibited by fructose 1,6-bisphosphate (FBP). Its function is as follows. Key enzyme in the regulation of glycerol uptake and metabolism. Catalyzes the phosphorylation of glycerol to yield sn-glycerol 3-phosphate. This is Glycerol kinase from Clostridium botulinum (strain Langeland / NCTC 10281 / Type F).